The sequence spans 38 residues: Cytochrome b6-f complex subunit 5 (38 aa).

A helical transmembrane segment spans residues 5–25 (LLLGIVLGLIPITLAGLFVAA).

Belongs to the PetG family. In terms of assembly, the 4 large subunits of the cytochrome b6-f complex are cytochrome b6, subunit IV (17 kDa polypeptide, PetD), cytochrome f and the Rieske protein, while the 4 small subunits are PetG, PetL, PetM and PetN. The complex functions as a dimer.

It localises to the cellular thylakoid membrane. Functionally, component of the cytochrome b6-f complex, which mediates electron transfer between photosystem II (PSII) and photosystem I (PSI), cyclic electron flow around PSI, and state transitions. PetG is required for either the stability or assembly of the cytochrome b6-f complex. The chain is Cytochrome b6-f complex subunit 5 from Crocosphaera subtropica (strain ATCC 51142 / BH68) (Cyanothece sp. (strain ATCC 51142)).